The chain runs to 487 residues: UPF0276 protein SAV_2218 (487 aa).

The UPF0276 stretch occupies residues 1–285; that stretch reads MVEEGTMERL…LGAIRKTLEK (285 aa). Residues 286 to 487 are unknown; that stretch reads AGTRAGASAG…RATRRVLLRR (202 aa). The segment at 319 to 348 is disordered; that stretch reads AGPRRGGADAQAAPRAAGTEALSAASTSTP. The segment covering 326-348 has biased composition (low complexity); it reads ADAQAAPRAAGTEALSAASTSTP.

This sequence in the N-terminal section; belongs to the UPF0276 family.

The protein is UPF0276 protein SAV_2218 of Streptomyces avermitilis (strain ATCC 31267 / DSM 46492 / JCM 5070 / NBRC 14893 / NCIMB 12804 / NRRL 8165 / MA-4680).